The primary structure comprises 255 residues: Hydroxyacylglutathione hydrolase (255 aa).

Positions 56, 58, 60, 61, 114, 133, and 171 each coordinate Zn(2+).

Belongs to the metallo-beta-lactamase superfamily. Glyoxalase II family. As to quaternary structure, monomer. The cofactor is Zn(2+).

It carries out the reaction an S-(2-hydroxyacyl)glutathione + H2O = a 2-hydroxy carboxylate + glutathione + H(+). The protein operates within secondary metabolite metabolism; methylglyoxal degradation; (R)-lactate from methylglyoxal: step 2/2. Its function is as follows. Thiolesterase that catalyzes the hydrolysis of S-D-lactoyl-glutathione to form glutathione and D-lactic acid. This chain is Hydroxyacylglutathione hydrolase, found in Roseobacter denitrificans (strain ATCC 33942 / OCh 114) (Erythrobacter sp. (strain OCh 114)).